The sequence spans 121 residues: Aspartate 1-decarboxylase (121 aa).

Residue Ser25 is the Schiff-base intermediate with substrate; via pyruvic acid of the active site. Residue Ser25 is modified to Pyruvic acid (Ser). Thr57 contributes to the substrate binding site. Tyr58 functions as the Proton donor in the catalytic mechanism. 73–75 (GAA) provides a ligand contact to substrate.

The protein belongs to the PanD family. As to quaternary structure, heterooctamer of four alpha and four beta subunits. The cofactor is pyruvate. Post-translationally, is synthesized initially as an inactive proenzyme, which is activated by self-cleavage at a specific serine bond to produce a beta-subunit with a hydroxyl group at its C-terminus and an alpha-subunit with a pyruvoyl group at its N-terminus.

It is found in the cytoplasm. The catalysed reaction is L-aspartate + H(+) = beta-alanine + CO2. Its pathway is cofactor biosynthesis; (R)-pantothenate biosynthesis; beta-alanine from L-aspartate: step 1/1. Its function is as follows. Catalyzes the pyruvoyl-dependent decarboxylation of aspartate to produce beta-alanine. The polypeptide is Aspartate 1-decarboxylase (Wolinella succinogenes (strain ATCC 29543 / DSM 1740 / CCUG 13145 / JCM 31913 / LMG 7466 / NCTC 11488 / FDC 602W) (Vibrio succinogenes)).